Reading from the N-terminus, the 718-residue chain is Kelch-like protein 4 (718 aa).

Residues 46-69 (TPVQGRLKSHSRDRNGLKKSNSPV) are disordered. Positions 182–249 (CDVLLIAGHL…AYTGVLQLKE (68 aa)) constitute a BTB domain. Kelch repeat units follow at residues 430-476 (ALYA…VIDN), 477-523 (KLYV…TLEG), 525-570 (MYAV…ALNN), 571-617 (KLYA…TYNG), 619-670 (LYVV…PLGD), and 671-717 (KLYV…VVKL).

In terms of tissue distribution, expressed in adult fibroblasts and in a range of fetal tissues including tongue, palate, and mandible.

Its subcellular location is the cytoplasm. It is found in the cytoskeleton. In Homo sapiens (Human), this protein is Kelch-like protein 4 (KLHL4).